The primary structure comprises 232 residues: Zinc finger protein RTS2 (232 aa).

The C2H2-type zinc finger occupies 24–48 (YYCQICQRQCKDANGFQSHNKSPSH). Disordered regions lie at residues 180–199 (AKRQ…ISGD) and 211–232 (GNGR…IKFR).

It is found in the nucleus. The polypeptide is Zinc finger protein RTS2 (RTS2) (Saccharomyces cerevisiae (strain ATCC 204508 / S288c) (Baker's yeast)).